Consider the following 558-residue polypeptide: Phosphatidylserine lipase ABHD16A (558 aa).

2 consecutive transmembrane segments (helical) span residues 60–80 (ILAL…FAFF) and 93–113 (VVPF…VACL). Topologically, residues 114–558 (RGIGRWTNPQ…AQNFQMPWHL (445 aa)) are cytoplasmic. The region spanning 281 to 407 (LVICCEGNAG…LVTRTVRQHL (127 aa)) is the AB hydrolase-1 domain. Active-site charge relay system residues include serine 355, aspartate 430, and histidine 507.

The protein belongs to the AB hydrolase superfamily. ABHD16 family.

The protein localises to the membrane. The catalysed reaction is 1-heptadecanoyl-2-(5Z,8Z,11Z,14Z-eicosatetraenoyl)-sn-glycero-3-phosphoserine + H2O = 1-heptadecanoyl-sn-glycero-3-phosphoserine + (5Z,8Z,11Z,14Z)-eicosatetraenoate + H(+). It carries out the reaction 1-hexadecanoyl-2-(9Z-octadecenoyl)-sn-glycero-3-phospho-L-serine + H2O = 1-hexadecanoyl-sn-glycero-3-phospho-L-serine + (9Z)-octadecenoate + H(+). The enzyme catalyses 1-octadecanoyl-2-(9Z,12Z-octadecadienoyl)-sn-glycero-3-phosphoserine + H2O = 1-octadecanoyl-sn-glycero-3-phosphoserine + (9Z,12Z)-octadecadienoate + H(+). It catalyses the reaction 1-heptadecanoyl-2-(5Z,8Z,11Z,14Z-eicosatetraenoyl)-sn-glycero-3-phosphocholine + H2O = 1-heptadecanoyl-sn-glycero-3-phosphocholine + (5Z,8Z,11Z,14Z)-eicosatetraenoate + H(+). The catalysed reaction is 1-hexadecanoyl-2-(9Z-octadecenoyl)-sn-glycero-3-phosphoglycerol + H2O = 1-hexadecanoyl-sn-glycero-3-phosphoglycerol + (9Z)-octadecenoate + H(+). It carries out the reaction 1-hexadecanoyl-2-(9Z-octadecenoyl)-sn-glycero-3-phospho-(1D-myo-inositol) + H2O = 1-hexadecanoyl-sn-glycero-3-phospho-(1D-myo-inositol) + (9Z)-octadecenoate + H(+). The enzyme catalyses 1-heptadecanoyl-2-(5Z,8Z,11Z,14Z-eicosatetraenoyl)-sn-glycero-3-phosphoethanolamine + H2O = 1-heptadecanoyl-sn-glycero-3-phosphoethanolamine + (5Z,8Z,11Z,14Z)-eicosatetraenoate + H(+). It catalyses the reaction 1-hexadecanoyl-2-(9Z-octadecenoyl)-sn-glycero-3-phospho-(1'-sn-glycerol) + H2O = 1-hexadecanoyl-sn-glycero-3-phospho-(1'-sn-glycerol) + (9Z)-octadecenoate + H(+). The catalysed reaction is Hydrolyzes glycerol monoesters of long-chain fatty acids.. It carries out the reaction 1-tetradecanoylglycerol + H2O = tetradecanoate + glycerol + H(+). The enzyme catalyses 2-hexadecanoylglycerol + H2O = glycerol + hexadecanoate + H(+). It catalyses the reaction 1-(9Z-octadecenoyl)-glycerol + H2O = glycerol + (9Z)-octadecenoate + H(+). The catalysed reaction is 2-(9Z-octadecenoyl)-glycerol + H2O = glycerol + (9Z)-octadecenoate + H(+). It carries out the reaction 2-(9Z,12Z-octadecadienoyl)-glycerol + H2O = (9Z,12Z)-octadecadienoate + glycerol + H(+). The enzyme catalyses 1-(5Z,8Z,11Z,14Z-eicosatetraenoyl)-glycerol + H2O = glycerol + (5Z,8Z,11Z,14Z)-eicosatetraenoate + H(+). It catalyses the reaction 2-(5Z,8Z,11Z,14Z-eicosatetraenoyl)-glycerol + H2O = glycerol + (5Z,8Z,11Z,14Z)-eicosatetraenoate + H(+). The catalysed reaction is prostaglandin D2-1-glycerol ester + H2O = prostaglandin D2 + glycerol + H(+). It carries out the reaction 2-glyceryl-15-deoxy-Delta(12,14)-prostaglandin J2 + H2O = 15-deoxy-Delta(12,14)-prostaglandin J2 + glycerol + H(+). The enzyme catalyses 1-(9Z,12Z-octadecadienoyl)-glycerol + H2O = (9Z,12Z)-octadecadienoate + glycerol + H(+). Phosphatidylserine (PS) lipase that mediates the hydrolysis of phosphatidylserine to generate lysophosphatidylserine (LPS). LPS constitutes a class of signaling lipids that regulates immunological and neurological processes. Has no activity towards diacylglycerol, triacylglycerol or lysophosphatidylserine lipase. Also has monoacylglycerol lipase activity, with preference for 1-(9Z,12Z-octadecadienoyl)-glycerol (1-LG) and 2-glyceryl-15-deoxy-Delta(12,14)-prostaglandin J2 (15d-PGJ(2)-G). This Bos taurus (Bovine) protein is Phosphatidylserine lipase ABHD16A.